The primary structure comprises 305 residues: Ribosomal protein L11 methyltransferase (305 aa).

Residues T149, G176, D198, and N240 each coordinate S-adenosyl-L-methionine.

It belongs to the methyltransferase superfamily. PrmA family.

Its subcellular location is the cytoplasm. It catalyses the reaction L-lysyl-[protein] + 3 S-adenosyl-L-methionine = N(6),N(6),N(6)-trimethyl-L-lysyl-[protein] + 3 S-adenosyl-L-homocysteine + 3 H(+). Functionally, methylates ribosomal protein L11. This Trichlorobacter lovleyi (strain ATCC BAA-1151 / DSM 17278 / SZ) (Geobacter lovleyi) protein is Ribosomal protein L11 methyltransferase.